The following is a 198-amino-acid chain: Imidazoleglycerol-phosphate dehydratase (198 aa).

Belongs to the imidazoleglycerol-phosphate dehydratase family.

It localises to the cytoplasm. It carries out the reaction D-erythro-1-(imidazol-4-yl)glycerol 3-phosphate = 3-(imidazol-4-yl)-2-oxopropyl phosphate + H2O. It functions in the pathway amino-acid biosynthesis; L-histidine biosynthesis; L-histidine from 5-phospho-alpha-D-ribose 1-diphosphate: step 6/9. This chain is Imidazoleglycerol-phosphate dehydratase, found in Herminiimonas arsenicoxydans.